The following is a 428-amino-acid chain: Kynureninase (428 aa).

Residues Thr104, Thr105, 132 to 135 (FPSD), Asp213, His216, and Tyr238 contribute to the pyridoxal 5'-phosphate site. Lys239 is subject to N6-(pyridoxal phosphate)lysine. Pyridoxal 5'-phosphate-binding residues include Trp267 and Thr295.

It belongs to the kynureninase family. Homodimer. Pyridoxal 5'-phosphate is required as a cofactor.

The catalysed reaction is L-kynurenine + H2O = anthranilate + L-alanine + H(+). The enzyme catalyses 3-hydroxy-L-kynurenine + H2O = 3-hydroxyanthranilate + L-alanine + H(+). It functions in the pathway amino-acid degradation; L-kynurenine degradation; L-alanine and anthranilate from L-kynurenine: step 1/1. The protein operates within cofactor biosynthesis; NAD(+) biosynthesis; quinolinate from L-kynurenine: step 2/3. Its function is as follows. Catalyzes the cleavage of L-kynurenine (L-Kyn) and L-3-hydroxykynurenine (L-3OHKyn) into anthranilic acid (AA) and 3-hydroxyanthranilic acid (3-OHAA), respectively. The chain is Kynureninase from Bacillus cereus (strain ATCC 14579 / DSM 31 / CCUG 7414 / JCM 2152 / NBRC 15305 / NCIMB 9373 / NCTC 2599 / NRRL B-3711).